The chain runs to 933 residues: Thyroid peroxidase (933 aa).

The first 18 residues, 1–18 (MRALAVLSVTLVMACTEA), serve as a signal peptide directing secretion. The Extracellular portion of the chain corresponds to 19–846 (FFPFISRGKE…TCVDSGRLPR (828 aa)). Asparagine 129 carries N-linked (GlcNAc...) asparagine glycosylation. Cysteine 142 and cysteine 158 are joined by a disulfide. Aspartate 238 is a heme b binding site. The active-site Proton acceptor is histidine 239. Residue aspartate 240 participates in Ca(2+) binding. Cystine bridges form between cysteine 259–cysteine 269 and cysteine 263–cysteine 286. Asparagine 307 is a glycosylation site (N-linked (GlcNAc...) asparagine). Residues threonine 321, phenylalanine 323, aspartate 325, and serine 327 each contribute to the Ca(2+) site. Asparagine 342 carries N-linked (GlcNAc...) asparagine glycosylation. Heme b-binding residues include glutamate 399 and histidine 494. The N-linked (GlcNAc...) asparagine glycan is linked to asparagine 569. 2 disulfides stabilise this stretch: cysteine 598/cysteine 655 and cysteine 696/cysteine 721. One can recognise a Sushi domain in the interval 740 to 795 (DKCGFPESVENGDFVHCEESGRRVLVYSCRHGYELQGREQLTCTQEGWDFQPPLCK). Residues 796-839 (DVNECADGAHPPCHASARCRNTKGGFQCLCADPYELGDDGRTCV) form the EGF-like; calcium-binding domain. 3 disulfides stabilise this stretch: cysteine 800–cysteine 814, cysteine 808–cysteine 823, and cysteine 825–cysteine 838. A helical membrane pass occupies residues 847-871 (VTWISMSLAALLIGGFAGLTSTVIC). Residues 872–933 (RWTRTGTKST…RDTHRLPRAL (62 aa)) lie on the Cytoplasmic side of the membrane. The disordered stretch occupies residues 881–933 (TLPISETGGGTPELRCGKHQAVGTSPQRAAAQDSEQESAGMEGRDTHRLPRAL). The segment covering 922–933 (EGRDTHRLPRAL) has biased composition (basic and acidic residues).

It belongs to the peroxidase family. XPO subfamily. In terms of assembly, interacts with DUOX1, DUOX2 and CYBA. It depends on Ca(2+) as a cofactor. Heme b serves as cofactor. Glycosylated. Post-translationally, heme is covalently bound through a H(2)O(2)-dependent autocatalytic process. Heme insertion is important for the delivery of protein at the cell surface. In terms of processing, cleaved in its N-terminal part.

The protein resides in the membrane. Its subcellular location is the cell surface. The catalysed reaction is 2 iodide + H2O2 + 2 H(+) = diiodine + 2 H2O. It catalyses the reaction [thyroglobulin]-L-tyrosine + iodide + H2O2 + H(+) = [thyroglobulin]-3-iodo-L-tyrosine + 2 H2O. It carries out the reaction [thyroglobulin]-3-iodo-L-tyrosine + iodide + H2O2 + H(+) = [thyroglobulin]-3,5-diiodo-L-tyrosine + 2 H2O. The enzyme catalyses 2 [thyroglobulin]-3,5-diiodo-L-tyrosine + H2O2 = [thyroglobulin]-L-thyroxine + [thyroglobulin]-dehydroalanine + 2 H2O. The catalysed reaction is [thyroglobulin]-3-iodo-L-tyrosine + [thyroglobulin]-3,5-diiodo-L-tyrosine + H2O2 = [thyroglobulin]-3,3',5-triiodo-L-thyronine + [thyroglobulin]-dehydroalanine + 2 H2O. Its pathway is hormone biosynthesis; thyroid hormone biosynthesis. Its function is as follows. Iodination and coupling of the hormonogenic tyrosines in thyroglobulin to yield the thyroid hormones T(3) and T(4). The polypeptide is Thyroid peroxidase (Homo sapiens (Human)).